The primary structure comprises 162 residues: Disulfide bond formation protein B (162 aa).

The Cytoplasmic segment spans residues 1–8; sequence MTPLFRKA. The chain crosses the membrane as a helical span at residues 9 to 25; the sequence is VWLLFAVSVCAFAGSLA. The Periplasmic portion of the chain corresponds to 26 to 43; that stretch reads AQYVLGMEPCVLCISQRL. The cysteines at positions 35 and 38 are disulfide-linked. A helical membrane pass occupies residues 44–60; sequence CVLATALCTAIVLMCRP. The Cytoplasmic portion of the chain corresponds to 61-67; it reads RRRAGGL. Residues 68-85 form a helical membrane-spanning segment; it reads FGAVFISIPAVTGISVAA. At 86–141 the chain is on the periplasmic side; sequence YQLWLQSLPPGTAPSCGAPWTFRLKGWPLFDWFEPVVRGFGNCAEPDYLLGIALPV. Cysteine 101 and cysteine 128 are oxidised to a cystine. The chain crosses the membrane as a helical span at residues 142 to 160; sequence WSVAYFLAVVLTVWWAWAR. At 161–162 the chain is on the cytoplasmic side; sequence AK.

It belongs to the DsbB family.

The protein localises to the cell inner membrane. Its function is as follows. Required for disulfide bond formation in some periplasmic proteins. Acts by oxidizing the DsbA protein. The protein is Disulfide bond formation protein B of Neisseria meningitidis serogroup B (strain ATCC BAA-335 / MC58).